The following is a 628-amino-acid chain: Chaperone protein DnaK (628 aa).

Residue Thr195 is modified to Phosphothreonine; by autocatalysis. Residues 545-628 (QLEENEGAAQ…VIDADFKAAE (84 aa)) form a disordered region. Over residues 555–591 (DAKDALKAAADEAEEAVRSEDDARIESAQKRLEEELR) the composition is skewed to basic and acidic residues. Over residues 596–612 (AQQAAGQGQPQGAQAQG) the composition is skewed to low complexity. Residues 614–628 (KADDDVIDADFKAAE) show a composition bias toward basic and acidic residues.

It belongs to the heat shock protein 70 family.

In terms of biological role, acts as a chaperone. In Deinococcus deserti (strain DSM 17065 / CIP 109153 / LMG 22923 / VCD115), this protein is Chaperone protein DnaK.